The primary structure comprises 208 residues: Large ribosomal subunit protein uL4 (208 aa).

The segment at 45–89 (RQGTHAHKNRSAVSGGGKKPWRQKGTGRARQGSTRSPQWRGGGTV) is disordered.

This sequence belongs to the universal ribosomal protein uL4 family. As to quaternary structure, part of the 50S ribosomal subunit.

Its function is as follows. One of the primary rRNA binding proteins, this protein initially binds near the 5'-end of the 23S rRNA. It is important during the early stages of 50S assembly. It makes multiple contacts with different domains of the 23S rRNA in the assembled 50S subunit and ribosome. In terms of biological role, forms part of the polypeptide exit tunnel. The protein is Large ribosomal subunit protein uL4 of Lactococcus lactis subsp. cremoris (strain MG1363).